The following is a 137-amino-acid chain: MSENQDTQKSFLETVKFDDRGLVPAIVQDHETGKVLMMAWMNLESLKMTLEKKKACYWSRSRNKLWLKGESSGNMQDVHDIMIDCDGDTLLLKVSQKGGACHVGYHSCFYRKTTDGEQMEICDTLMFDPEEVYGKKS.

A Mg(2+)-binding site is contributed by Asp84. Cys85 serves as a coordination point for Zn(2+). Positions 86 and 88 each coordinate Mg(2+). Zn(2+)-binding residues include Cys101 and Cys108.

The protein belongs to the PRA-CH family. In terms of assembly, homodimer. Mg(2+) is required as a cofactor. It depends on Zn(2+) as a cofactor.

It is found in the cytoplasm. It catalyses the reaction 1-(5-phospho-beta-D-ribosyl)-5'-AMP + H2O = 1-(5-phospho-beta-D-ribosyl)-5-[(5-phospho-beta-D-ribosylamino)methylideneamino]imidazole-4-carboxamide. The protein operates within amino-acid biosynthesis; L-histidine biosynthesis; L-histidine from 5-phospho-alpha-D-ribose 1-diphosphate: step 3/9. In terms of biological role, catalyzes the hydrolysis of the adenine ring of phosphoribosyl-AMP. This chain is Phosphoribosyl-AMP cyclohydrolase, found in Chlorobaculum parvum (strain DSM 263 / NCIMB 8327) (Chlorobium vibrioforme subsp. thiosulfatophilum).